A 663-amino-acid chain; its full sequence is Translation factor GUF1 homolog, mitochondrial (663 aa).

The tr-type G domain occupies 64 to 250 (EKIRNFSIIA…AVIERIPPPP (187 aa)). GTP is bound by residues 73-80 (AHIDHGKS), 143-147 (DTPGH), and 197-200 (NKID).

The protein belongs to the TRAFAC class translation factor GTPase superfamily. Classic translation factor GTPase family. LepA subfamily.

It is found in the mitochondrion inner membrane. It carries out the reaction GTP + H2O = GDP + phosphate + H(+). Its function is as follows. Promotes mitochondrial protein synthesis. May act as a fidelity factor of the translation reaction, by catalyzing a one-codon backward translocation of tRNAs on improperly translocated ribosomes. Binds to mitochondrial ribosomes in a GTP-dependent manner. This is Translation factor GUF1 homolog, mitochondrial from Arabidopsis thaliana (Mouse-ear cress).